The chain runs to 82 residues: Putative membrane protein insertion efficiency factor (82 aa).

It belongs to the UPF0161 family.

Its subcellular location is the cell inner membrane. Its function is as follows. Could be involved in insertion of integral membrane proteins into the membrane. The sequence is that of Putative membrane protein insertion efficiency factor from Francisella tularensis subsp. novicida (strain U112).